The sequence spans 98 residues: NADH-ubiquinone oxidoreductase chain 4L (98 aa).

The next 3 membrane-spanning stretches (helical) occupy residues 1-21, 29-49, and 61-81; these read MSLVYMNIMTAFTVSLTGLLM, SLLCLEGMMLALFVMATLTIL, and IILLVFAACEAALGLSLLVMV.

This sequence belongs to the complex I subunit 4L family. Core subunit of respiratory chain NADH dehydrogenase (Complex I) which is composed of 45 different subunits.

It localises to the mitochondrion inner membrane. The enzyme catalyses a ubiquinone + NADH + 5 H(+)(in) = a ubiquinol + NAD(+) + 4 H(+)(out). In terms of biological role, core subunit of the mitochondrial membrane respiratory chain NADH dehydrogenase (Complex I) which catalyzes electron transfer from NADH through the respiratory chain, using ubiquinone as an electron acceptor. Part of the enzyme membrane arm which is embedded in the lipid bilayer and involved in proton translocation. The sequence is that of NADH-ubiquinone oxidoreductase chain 4L (MT-ND4L) from Elaphodus cephalophus (Tufted deer).